Consider the following 431-residue polypeptide: Glutamate-1-semialdehyde 2,1-aminomutase (431 aa).

Lysine 269 bears the N6-(pyridoxal phosphate)lysine mark.

The protein belongs to the class-III pyridoxal-phosphate-dependent aminotransferase family. HemL subfamily. Homodimer. Pyridoxal 5'-phosphate serves as cofactor.

The protein localises to the cytoplasm. The enzyme catalyses (S)-4-amino-5-oxopentanoate = 5-aminolevulinate. It functions in the pathway porphyrin-containing compound metabolism; protoporphyrin-IX biosynthesis; 5-aminolevulinate from L-glutamyl-tRNA(Glu): step 2/2. The protein operates within porphyrin-containing compound metabolism; chlorophyll biosynthesis. The sequence is that of Glutamate-1-semialdehyde 2,1-aminomutase from Chlorobium phaeobacteroides (strain DSM 266 / SMG 266 / 2430).